A 229-amino-acid chain; its full sequence is Prolactin (229 aa).

The first 30 residues, 1 to 30 (MSNRGASLKGLFLAVLLVSNTLLTKEGVTS), serve as a signal peptide directing secretion. Disulfide bonds link Cys34–Cys41, Cys88–Cys204, and Cys221–Cys229.

This sequence belongs to the somatotropin/prolactin family.

It is found in the secreted. This chain is Prolactin (PRL), found in Gallus gallus (Chicken).